Consider the following 141-residue polypeptide: Drosulfakinins (141 aa).

Positions 1–33 are cleaved as a signal peptide; the sequence is MGLRSCTHLATLFMTLWALAFCFLVVVPIPAQT. Residues 34 to 73 constitute a propeptide that is removed on maturation; the sequence is TSLQNAKDDRRLQELESKIGAESDQPNANLVGPSFSRFGD. Residues 51-72 form a disordered region; it reads KIGAESDQPNANLVGPSFSRFG. A Phenylalanine amide modification is found at Phe82. Positions 86–111 are excised as a propeptide; the sequence is VPLISRPMIPIELDLLMDNDDERTKA. Tyr117 carries the post-translational modification Sulfotyrosine. Phe122 carries the post-translational modification Phenylalanine amide. Tyr134 bears the Sulfotyrosine mark. Phe139 carries the post-translational modification Phenylalanine amide.

Belongs to the gastrin/cholecystokinin family.

It localises to the secreted. Functionally, drosulfakinin-0 (DSK 0) plays diverse biological roles including regulating gut muscle contraction in adults but not in larvae. This chain is Drosulfakinins, found in Drosophila mauritiana (Fruit fly).